A 154-amino-acid polypeptide reads, in one-letter code: Decarboxylase claH (154 aa).

It belongs to the tpcK family.

It catalyses the reaction atrochrysone carboxylate + H(+) = atrochrysone + CO2. The protein operates within pigment biosynthesis. Its function is as follows. Decarboxylase involved in the biosynthesis of the bianthraquinone cladofulvin, a conidial pigment not required for virulence but that plays a role in fitness and resistance to environmental stresses including UV light and low-temperature stress. The pathway begins with the synthesis of atrochrysone thioester by the polyketide synthase (PKS) claG. The atrochrysone carboxyl ACP thioesterase claF then breaks the thioester bond and releases the atrochrysone carboxylic acid from claG. This compound is decarboxylated by claH to yield emodin, which is further converted to chrysophanol hydroquinone by the reductase claC and the dehydratase claB. The cytochrome monooxygenase P450 claM then catalyzes the dimerization of nataloe-emodin to cladofulvin. The sequence is that of Decarboxylase claH from Passalora fulva (Tomato leaf mold).